The chain runs to 176 residues: Lactoylglutathione lyase (176 aa).

One can recognise a VOC domain in the interval 23-167 (VFNHTMLRVK…DGYWVEIVQA (145 aa)). His26 is a Ni(2+) binding site. Substrate is bound at residue Arg30. Position 92 (Glu92) interacts with Ni(2+). Residues Asn96, Arg114, and His118 each contribute to the substrate site. Ni(2+) is bound by residues His118 and Glu163. Residue Glu163 is the Proton donor/acceptor of the active site.

The protein belongs to the glyoxalase I family. Monomer. Ni(2+) serves as cofactor. Requires Zn(2+) as cofactor.

It catalyses the reaction (R)-S-lactoylglutathione = methylglyoxal + glutathione. The protein operates within secondary metabolite metabolism; methylglyoxal degradation; (R)-lactate from methylglyoxal: step 1/2. Its function is as follows. Catalyzes the conversion of hemimercaptal, formed from methylglyoxal and glutathione, to S-lactoylglutathione. In Pseudomonas aeruginosa (strain ATCC 15692 / DSM 22644 / CIP 104116 / JCM 14847 / LMG 12228 / 1C / PRS 101 / PAO1), this protein is Lactoylglutathione lyase (gloA).